We begin with the raw amino-acid sequence, 381 residues long: Beta-1,4-galactosyltransferase 5 (381 aa).

Topologically, residues 1–11 (MPTHLRFRRRS) are cytoplasmic. A helical; Signal-anchor for type II membrane protein membrane pass occupies residues 12–32 (FLGLLFLFSLSTSALYFIYSA). The Lumenal portion of the chain corresponds to 33–381 (PGIVNEYLFM…SRDLAPVADY (349 aa)). N-linked (GlcNAc...) asparagine glycans are attached at residues asparagine 73, asparagine 82, and asparagine 120. Cysteine 106 and cysteine 151 are disulfide-bonded. Residues 162–166 (PFRNR), 201–203 (FNR), 228–229 (VD), tyrosine 257, and tryptophan 289 each bind UDP-alpha-D-galactose. An intrachain disulfide couples cysteine 222 to cysteine 241. Aspartate 229 provides a ligand contact to Mn(2+). 291-294 (GEDD) contributes to the N-acetyl-D-glucosamine binding site. Histidine 322 contributes to the Mn(2+) binding site. 322-323 (HH) lines the UDP-alpha-D-galactose pocket. Residue arginine 333 coordinates N-acetyl-D-glucosamine. Residue asparagine 366 is glycosylated (N-linked (GlcNAc...) asparagine).

Belongs to the glycosyltransferase 7 family. Requires Mn(2+) as cofactor.

Its subcellular location is the golgi apparatus. It is found in the golgi stack membrane. The catalysed reaction is a beta-D-glucosyl-(1&lt;-&gt;1')-N-acylsphing-4-enine + UDP-alpha-D-galactose = a beta-D-Gal-(1-&gt;4)-beta-D-Glc-(1&lt;-&gt;1)-Cer(d18:1(4E)) + UDP + H(+). The protein operates within protein modification; protein glycosylation. It participates in sphingolipid metabolism. Catalyzes the synthesis of lactosylceramide (LacCer) via the transfer of galactose from UDP-galactose to glucosylceramide (GlcCer). Required for proper patterning of the dorsoventral axis during embryogenesis through the regulation of BMP signaling. Plays a role in proteoglycan glycosylation that is required for BMP-dependent specification of the dorsoventral axis. This Danio rerio (Zebrafish) protein is Beta-1,4-galactosyltransferase 5 (b4galt5).